We begin with the raw amino-acid sequence, 187 residues long: Superoxide dismutase [Cu-Zn] (187 aa).

An N-terminal signal peptide occupies residues 1–23 (MMKMKTLLALAISGICAAGVANA). Residues histidine 80, histidine 82, and histidine 105 each contribute to the Cu cation site. A disulfide bridge connects residues cysteine 87 and cysteine 183. Residues histidine 105, histidine 114, histidine 123, and aspartate 126 each contribute to the Zn(2+) site. Histidine 161 contacts Cu cation.

This sequence belongs to the Cu-Zn superoxide dismutase family. In terms of assembly, homodimer. It depends on Cu cation as a cofactor. The cofactor is Zn(2+).

It is found in the periplasm. It carries out the reaction 2 superoxide + 2 H(+) = H2O2 + O2. Its function is as follows. Destroys radicals which are normally produced within the cells and which are toxic to biological systems. May confer survival advantage by accelerating dismutation of superoxide of environmental origin to hydrogen peroxide, disruptive to the normal mucociliary clearance process in the host. This is Superoxide dismutase [Cu-Zn] (sodC) from Haemophilus parainfluenzae.